The sequence spans 534 residues: Major facilitator-type transporter sor6 (534 aa).

Asparagine 29 and asparagine 36 each carry an N-linked (GlcNAc...) asparagine glycan. The next 12 helical transmembrane spans lie at 66-86 (WFLT…SSAY), 103-123 (LFIT…AVWG), 160-180 (AMVA…LIVL), 182-202 (FLAG…IADL), 209-229 (GLAM…GPIV), 241-261 (WVQG…VIFV), 318-338 (IVLI…MFLG), 354-374 (FGGL…GYAI), 395-415 (LPPA…FAWT), 424-444 (VSIV…LPIV), 456-476 (ASVL…FPLF), and 486-506 (IHWA…FPFF).

This sequence belongs to the major facilitator superfamily. Sugar transporter (TC 2.A.1.1) family.

It localises to the membrane. Major facilitator-type transporter; part of the gene cluster that mediates the biosynthesis of sorbicillinoids, a diverse group of yellow secondary metabolites that restrict growth of competing pathogenic fungi but not of bacteria. This Hypocrea jecorina (strain QM6a) (Trichoderma reesei) protein is Major facilitator-type transporter sor6.